Reading from the N-terminus, the 347-residue chain is NADH-quinone oxidoreductase subunit H (347 aa).

Helical transmembrane passes span 13–33 (LIIA…VAYL), 82–102 (GVFL…WAVI), 115–135 (VGIL…IMGG), 161–181 (IGFV…TDIV), 198–218 (FLDW…ISAL), 248–268 (FLLF…LMTV), 286–306 (VPGI…FAMV), and 325–345 (VFLP…KVFG).

It belongs to the complex I subunit 1 family. In terms of assembly, NDH-1 is composed of 14 different subunits. Subunits NuoA, H, J, K, L, M, N constitute the membrane sector of the complex.

It localises to the cell inner membrane. It catalyses the reaction a quinone + NADH + 5 H(+)(in) = a quinol + NAD(+) + 4 H(+)(out). In terms of biological role, NDH-1 shuttles electrons from NADH, via FMN and iron-sulfur (Fe-S) centers, to quinones in the respiratory chain. The immediate electron acceptor for the enzyme in this species is believed to be ubiquinone. Couples the redox reaction to proton translocation (for every two electrons transferred, four hydrogen ions are translocated across the cytoplasmic membrane), and thus conserves the redox energy in a proton gradient. This subunit may bind ubiquinone. In Brucella melitensis biotype 1 (strain ATCC 23456 / CCUG 17765 / NCTC 10094 / 16M), this protein is NADH-quinone oxidoreductase subunit H.